The sequence spans 367 residues: tRNA-specific 2-thiouridylase MnmA (367 aa).

ATP contacts are provided by residues 9-16 (LMSGGVDS) and Phe35. Catalysis depends on Cys107, which acts as the Nucleophile. Cysteines 107 and 205 form a disulfide. Gly131 lines the ATP pocket. Positions 155–157 (KDQ) are interaction with tRNA. Residue Cys205 is the Cysteine persulfide intermediate of the active site.

Belongs to the MnmA/TRMU family.

It is found in the cytoplasm. It catalyses the reaction S-sulfanyl-L-cysteinyl-[protein] + uridine(34) in tRNA + AH2 + ATP = 2-thiouridine(34) in tRNA + L-cysteinyl-[protein] + A + AMP + diphosphate + H(+). Its function is as follows. Catalyzes the 2-thiolation of uridine at the wobble position (U34) of tRNA, leading to the formation of s(2)U34. This chain is tRNA-specific 2-thiouridylase MnmA, found in Petrotoga mobilis (strain DSM 10674 / SJ95).